The following is a 336-amino-acid chain: 3-isopropylmalate dehydrogenase (336 aa).

Residues Arg-87, Arg-97, Arg-121, and Asp-211 each coordinate substrate. 3 residues coordinate Mg(2+): Asp-211, Asp-235, and Asp-239. Residue 271–283 (GSAPDIAGQGIAD) coordinates NAD(+).

It belongs to the isocitrate and isopropylmalate dehydrogenases family. LeuB type 2 subfamily. Homodimer. It depends on Mg(2+) as a cofactor. Mn(2+) is required as a cofactor.

It localises to the cytoplasm. It carries out the reaction (2R,3S)-3-isopropylmalate + NAD(+) = 4-methyl-2-oxopentanoate + CO2 + NADH. It participates in amino-acid biosynthesis; L-leucine biosynthesis; L-leucine from 3-methyl-2-oxobutanoate: step 3/4. Functionally, catalyzes the oxidation of 3-carboxy-2-hydroxy-4-methylpentanoate (3-isopropylmalate) to 3-carboxy-4-methyl-2-oxopentanoate. The product decarboxylates to 4-methyl-2 oxopentanoate. In Mycolicibacterium gilvum (strain PYR-GCK) (Mycobacterium gilvum (strain PYR-GCK)), this protein is 3-isopropylmalate dehydrogenase.